The primary structure comprises 404 residues: Cysteine desulfurase IscS (404 aa).

Pyridoxal 5'-phosphate is bound by residues 75-76 (AT), Asn155, Gln183, and 203-205 (SGH). Lys206 carries the N6-(pyridoxal phosphate)lysine modification. Thr243 contributes to the pyridoxal 5'-phosphate binding site. Catalysis depends on Cys328, which acts as the Cysteine persulfide intermediate. Residue Cys328 coordinates [2Fe-2S] cluster.

This sequence belongs to the class-V pyridoxal-phosphate-dependent aminotransferase family. NifS/IscS subfamily. In terms of assembly, homodimer. Forms a heterotetramer with IscU, interacts with other sulfur acceptors. The cofactor is pyridoxal 5'-phosphate.

Its subcellular location is the cytoplasm. The catalysed reaction is (sulfur carrier)-H + L-cysteine = (sulfur carrier)-SH + L-alanine. The protein operates within cofactor biosynthesis; iron-sulfur cluster biosynthesis. In terms of biological role, master enzyme that delivers sulfur to a number of partners involved in Fe-S cluster assembly, tRNA modification or cofactor biosynthesis. Catalyzes the removal of elemental sulfur and selenium atoms from cysteine and selenocysteine to produce alanine. Functions as a sulfur delivery protein for Fe-S cluster synthesis onto IscU, an Fe-S scaffold assembly protein, as well as other S acceptor proteins. Also functions as a selenium delivery protein in the pathway for the biosynthesis of selenophosphate. The sequence is that of Cysteine desulfurase IscS from Salmonella gallinarum (strain 287/91 / NCTC 13346).